Reading from the N-terminus, the 349-residue chain is Protein RecA (349 aa).

64 to 71 is a binding site for ATP; sequence GPESSGKT.

The protein belongs to the RecA family.

The protein localises to the cytoplasm. Functionally, can catalyze the hydrolysis of ATP in the presence of single-stranded DNA, the ATP-dependent uptake of single-stranded DNA by duplex DNA, and the ATP-dependent hybridization of homologous single-stranded DNAs. It interacts with LexA causing its activation and leading to its autocatalytic cleavage. This chain is Protein RecA, found in Rhodopseudomonas palustris (strain ATCC BAA-98 / CGA009).